We begin with the raw amino-acid sequence, 362 residues long: UDP-N-acetylglucosamine--N-acetylmuramyl-(pentapeptide) pyrophosphoryl-undecaprenol N-acetylglucosamine transferase (362 aa).

Residues threonine 11 to glycine 13, asparagine 124, arginine 163, serine 191, isoleucine 246, and glutamine 291 contribute to the UDP-N-acetyl-alpha-D-glucosamine site.

This sequence belongs to the glycosyltransferase 28 family. MurG subfamily.

The protein localises to the cell inner membrane. The enzyme catalyses di-trans,octa-cis-undecaprenyl diphospho-N-acetyl-alpha-D-muramoyl-L-alanyl-D-glutamyl-meso-2,6-diaminopimeloyl-D-alanyl-D-alanine + UDP-N-acetyl-alpha-D-glucosamine = di-trans,octa-cis-undecaprenyl diphospho-[N-acetyl-alpha-D-glucosaminyl-(1-&gt;4)]-N-acetyl-alpha-D-muramoyl-L-alanyl-D-glutamyl-meso-2,6-diaminopimeloyl-D-alanyl-D-alanine + UDP + H(+). It functions in the pathway cell wall biogenesis; peptidoglycan biosynthesis. Cell wall formation. Catalyzes the transfer of a GlcNAc subunit on undecaprenyl-pyrophosphoryl-MurNAc-pentapeptide (lipid intermediate I) to form undecaprenyl-pyrophosphoryl-MurNAc-(pentapeptide)GlcNAc (lipid intermediate II). This Idiomarina loihiensis (strain ATCC BAA-735 / DSM 15497 / L2-TR) protein is UDP-N-acetylglucosamine--N-acetylmuramyl-(pentapeptide) pyrophosphoryl-undecaprenol N-acetylglucosamine transferase.